Here is a 30-residue protein sequence, read N- to C-terminus: Phospholipase A2 acanmyotoxin-2 (30 aa).

Ca(2+)-binding residues include Tyr28 and Gly30.

It depends on Ca(2+) as a cofactor. In terms of processing, contains seven disulfide bonds. In terms of tissue distribution, expressed by the venom gland.

The protein resides in the secreted. It catalyses the reaction a 1,2-diacyl-sn-glycero-3-phosphocholine + H2O = a 1-acyl-sn-glycero-3-phosphocholine + a fatty acid + H(+). Its function is as follows. Snake venom phospholipase A2 (PLA2) that has myotoxic activity but no significant neurotoxicity. PLA2 catalyzes the calcium-dependent hydrolysis of the 2-acyl groups in 3-sn-phosphoglycerides. The chain is Phospholipase A2 acanmyotoxin-2 from Acanthophis sp. (strain Seram) (Seram death adder).